Consider the following 821-residue polypeptide: DNA ligase (821 aa).

NAD(+) is bound by residues 33 to 37 (DVDYD), 82 to 83 (SL), and Glu-113. The active-site N6-AMP-lysine intermediate is the Lys-115. Residues Arg-136, Glu-173, Lys-290, and Lys-314 each contribute to the NAD(+) site. Residues Cys-408, Cys-411, Cys-426, and Cys-432 each coordinate Zn(2+). The BRCT domain maps to 741–821 (IVAGPLDGQT…RLLAYLAEHE (81 aa)).

This sequence belongs to the NAD-dependent DNA ligase family. LigA subfamily. The cofactor is Mg(2+). Requires Mn(2+) as cofactor.

It carries out the reaction NAD(+) + (deoxyribonucleotide)n-3'-hydroxyl + 5'-phospho-(deoxyribonucleotide)m = (deoxyribonucleotide)n+m + AMP + beta-nicotinamide D-nucleotide.. Its function is as follows. DNA ligase that catalyzes the formation of phosphodiester linkages between 5'-phosphoryl and 3'-hydroxyl groups in double-stranded DNA using NAD as a coenzyme and as the energy source for the reaction. It is essential for DNA replication and repair of damaged DNA. The chain is DNA ligase from Stenotrophomonas maltophilia (strain R551-3).